Reading from the N-terminus, the 401-residue chain is Phosphoglycerate kinase (401 aa).

Substrate contacts are provided by residues 23–25 (DFN), R39, 62–65 (HLGR), R121, and R154. ATP contacts are provided by residues K207, G298, E329, and 355-358 (GGDT).

The protein belongs to the phosphoglycerate kinase family. Monomer.

It is found in the cytoplasm. The catalysed reaction is (2R)-3-phosphoglycerate + ATP = (2R)-3-phospho-glyceroyl phosphate + ADP. It functions in the pathway carbohydrate degradation; glycolysis; pyruvate from D-glyceraldehyde 3-phosphate: step 2/5. This is Phosphoglycerate kinase from Campylobacter fetus subsp. fetus (strain 82-40).